The chain runs to 51 residues: UPF0181 protein VVA0806 (51 aa).

The protein belongs to the UPF0181 family.

This chain is UPF0181 protein VVA0806, found in Vibrio vulnificus (strain YJ016).